Here is a 240-residue protein sequence, read N- to C-terminus: Small ribosomal subunit protein uS3 (240 aa).

In terms of domain architecture, KH type-2 spans 21–92 (LNEFFTRELA…TIVLYAERVQ (72 aa)). 2 positions are modified to phosphothreonine: Thr-44 and Thr-70. Ser-97 is subject to Phosphoserine. A Glycyl lysine isopeptide (Lys-Gly) (interchain with G-Cter in ubiquitin) cross-link involves residue Lys-106. Ser-129 is subject to Phosphoserine. Glycyl lysine isopeptide (Lys-Gly) (interchain with G-Cter in ubiquitin) cross-links involve residues Lys-132 and Lys-141. Omega-N-methylarginine; by SFM1 is present on Arg-146. Residues Lys-151, Lys-200, and Lys-212 each participate in a glycyl lysine isopeptide (Lys-Gly) (interchain with G-Cter in ubiquitin) cross-link. The segment at 212–240 (KEEEPILAPSVKDYRPAEETEAQAEPVEA) is disordered. Ser-221 bears the Phosphoserine mark. The segment covering 230 to 240 (ETEAQAEPVEA) has biased composition (acidic residues). Phosphothreonine is present on Thr-231.

The protein belongs to the universal ribosomal protein uS3 family. In terms of assembly, component of the small ribosomal subunit (SSU). Mature yeast ribosomes consist of a small (40S) and a large (60S) subunit. The 40S small subunit contains 1 molecule of ribosomal RNA (18S rRNA) and 33 different proteins (encoded by 57 genes). The large 60S subunit contains 3 rRNA molecules (25S, 5.8S and 5S rRNA) and 46 different proteins (encoded by 81 genes). Ubiquitinated at Lys-212 in response to stalled ribosomes. Ubiquitination leads to activation of the No-Go Decay (NGD) pathway and degradation of non-functional 18S rRNA: first monoubiquitinated at Lys-212 by MAG2, followed by formation of 'Lys-63'-linked polyubiquitin chains on monoubiquitin by HEL2 and RSP5.

The protein resides in the cytoplasm. Its function is as follows. Component of the ribosome, a large ribonucleoprotein complex responsible for the synthesis of proteins in the cell. The small ribosomal subunit (SSU) binds messenger RNAs (mRNAs) and translates the encoded message by selecting cognate aminoacyl-transfer RNA (tRNA) molecules. The large subunit (LSU) contains the ribosomal catalytic site termed the peptidyl transferase center (PTC), which catalyzes the formation of peptide bonds, thereby polymerizing the amino acids delivered by tRNAs into a polypeptide chain. The nascent polypeptides leave the ribosome through a tunnel in the LSU and interact with protein factors that function in enzymatic processing, targeting, and the membrane insertion of nascent chains at the exit of the ribosomal tunnel. The protein is Small ribosomal subunit protein uS3 of Saccharomyces cerevisiae (strain ATCC 204508 / S288c) (Baker's yeast).